The following is a 651-amino-acid chain: MALCKKTVGSVLEEWCLNEPLFGCKRHQNVRKKLRLIRIIGLLVSVVAISTFSLSISAFFKMETHSTVLASSLESQKLVHGHQRTLLDFMEQNEGSTPDSPTSMKHEAEHDNATEEHSKGEYPEDLFSLEERRKGAVILHVIGMIYMFIALAIVCDEFFVPSLTVITEKLSISDDVAGATFMAAGGSAPELFTSLIGVFISHSNVGIGTIVGSAVFNILFVIGMCALFSREILNLTWWPLFRDVSFYIVDLILLIIFFLDNLIMWWESLTLLTAYFCYVTFMKFNVQVEEWVKKVLNRNKVEKATTGDAEGKSPTAGDKDDQTLTTKPRLQRGGSSASLHNSLMRNSIFQLMIHTLDPLAEELGSYGNLKYYDTMTEEGKFKERASILHKIAKKKCQVEDSERQNGAANHEKGAKVEVAVTPPSDSGPVQNGIAHNVDEENEEDEDQPLSLAWPDTPRKQLTYLLVLPIVFPLWVSLPDVRNPRSRKFFPITFFGSISWIAFFSYLMVWWAHQVGETIGISEEIMGLTILAAGTSIPDLITSVIVARKGLGDMAVSSSVGSNIFDITVGLPLPWLLYAVINNFSPVTVSSNGLFCAIVLLFIMLLFVILSIAFCKWRMNKFLGFLMFGLYFVFLIVSVLLEDKVIQCPVSI.

At methionine 1–arginine 38 the chain is on the cytoplasmic side. Residues isoleucine 39–phenylalanine 59 form a helical membrane-spanning segment. At phenylalanine 60–lysine 134 the chain is on the extracellular side. The disordered stretch occupies residues glutamine 92–proline 123. Residues asparagine 93–serine 103 show a composition bias toward polar residues. Residues methionine 104–tyrosine 122 are compositionally biased toward basic and acidic residues. N-linked (GlcNAc...) asparagine glycosylation occurs at asparagine 112. The chain crosses the membrane as a helical span at residues glycine 135–cysteine 155. Over aspartate 156–alanine 179 the chain is Cytoplasmic. The Alpha-1 repeat unit spans residues valine 176–phenylalanine 216. The helical transmembrane segment at threonine 180 to isoleucine 200 threads the bilayer. At serine 201 to glycine 206 the chain is on the extracellular side. Residues isoleucine 207–leucine 227 traverse the membrane as a helical segment. At phenylalanine 228 to serine 245 the chain is on the cytoplasmic side. Residues phenylalanine 246–tryptophan 266 form a helical membrane-spanning segment. The Extracellular portion of the chain corresponds to glutamate 267–lysine 459. The span at alanine 304–glutamine 322 shows a compositional bias: basic and acidic residues. The tract at residues alanine 304–serine 338 is disordered. Over residues threonine 323 to serine 338 the composition is skewed to polar residues. A helical membrane pass occupies residues glutamine 460 to valine 480. The Cytoplasmic portion of the chain corresponds to arginine 481–lysine 487. Residues phenylalanine 488 to valine 508 traverse the membrane as a helical segment. Residues tryptophan 509–glutamate 523 are Extracellular-facing. A helical transmembrane segment spans residues isoleucine 524–isoleucine 544. One copy of the Alpha-2 repeat lies at alanine 531–asparagine 562. The Cytoplasmic segment spans residues valine 545–asparagine 562. A helical transmembrane segment spans residues isoleucine 563–phenylalanine 583. The Extracellular segment spans residues serine 584–glycine 592. A helical membrane pass occupies residues leucine 593–phenylalanine 613. Topologically, residues cysteine 614–lysine 620 are cytoplasmic. Residues phenylalanine 621–glutamate 641 form a helical membrane-spanning segment. At aspartate 642–isoleucine 651 the chain is on the extracellular side.

This sequence belongs to the Ca(2+):cation antiporter (CaCA) (TC 2.A.19) family. SLC24A subfamily. In terms of tissue distribution, retinal cones. Found in the cone inner segment layer and in a subpopulation of ganglion cells.

It is found in the cell membrane. It carries out the reaction Ca(2+)(out) + K(+)(out) + 4 Na(+)(in) = Ca(2+)(in) + K(+)(in) + 4 Na(+)(out). Its function is as follows. Calcium, potassium:sodium antiporter that transports 1 Ca(2+) and 1 K(+) in exchange for 4 Na(+). Required for learming and memory by regulating neuronal Ca(2+), which is essential for the development of synaptic plasticity. This is Sodium/potassium/calcium exchanger 2 (SLC24A2) from Gallus gallus (Chicken).